The sequence spans 314 residues: Ribosomal RNA small subunit methyltransferase H (314 aa).

Residues 34 to 36, Asp54, Phe83, Asp104, and Gln111 contribute to the S-adenosyl-L-methionine site; that span reads GGH.

The protein belongs to the methyltransferase superfamily. RsmH family.

It is found in the cytoplasm. It carries out the reaction cytidine(1402) in 16S rRNA + S-adenosyl-L-methionine = N(4)-methylcytidine(1402) in 16S rRNA + S-adenosyl-L-homocysteine + H(+). Specifically methylates the N4 position of cytidine in position 1402 (C1402) of 16S rRNA. This Ligilactobacillus salivarius (strain UCC118) (Lactobacillus salivarius) protein is Ribosomal RNA small subunit methyltransferase H.